Reading from the N-terminus, the 366-residue chain is Polyprenyl transferase AOL_s00215g276 (366 aa).

The interval 1 to 22 (MESIIARPRTRSSAKEKTQTMS) is disordered. 7 helical membrane-spanning segments follow: residues 53–73 (LHTLESLLCVYPAIWGACLSA), 85–105 (FLSVLFANWISMTIAHMAFCT), 137–157 (IIAFIVEMGLTVYISYATLGF), 160–180 (ALVCAPVWIASTIYPFMKRVV), 185–205 (LVLGPIIGMAVFPGWVSVAGN), 212–232 (AVPMFLATSAWVVYFDTIYAT), and 253–273 (HMHQFLGFLGSIQIALLSFTA). Asn-277 carries an N-linked (GlcNAc...) asparagine glycan. 2 helical membrane passes run 281–301 (LFWSLGVCVWGLNIPFHLLSL) and 312–332 (VFLMNILLGLWITIVCVIELW). An N-linked (GlcNAc...) asparagine glycan is attached at Asn-352.

It belongs to the UbiA prenyltransferase family. Mg(2+) serves as cofactor.

Its subcellular location is the membrane. It participates in secondary metabolite biosynthesis; terpenoid biosynthesis. Its function is as follows. Polyprenyl transferase; part of the gene cluster that mediates the biosynthesis of sesquiterpenyl epoxy-cyclohexenoids (SECs) such as anthrobotrisins and arthrosporols, metabolites that possess a novel hybrid carbon skeleton consisting of a polyketide-derived epoxycyclohexenol combined with a terpenoid-derived monocyclic sesquiterpenol substructure (PKS-PTS hybrid). The SEC pathway plays an important role for fungal soil colonization via decreasing fungal nematode-capturing ability. Within the pathway, the polyprenyl transferase catalyzes the farnesylation of toluquinol to yield farnesyl hydroquinone, the first hybrid precursor for biosynthesis of SECs, and farnesyl quinone (34) might be the key precursor for the epoxy ring formation. The pathway begins with the biosynthesis of 6-methylsalicylic acid (6-MSA), the first precursor of the polyketide-derived epoxycyclohexenol in arthrosporols, by the polyketide synthase (PKS) AOL_s00215g283 via condensation of 1 acetate and 3 malonate units. The 6-methylsalicylic acid decarboxylase AOL_s00215g281 then catalyzes the decarboxylation of 6-methylsalicylic acid to yield m-cresol. The cytochrome P450 monooxygenase AOL_s00215g282 further oxidizes m-cresol to yield toluquinol. With the assistance of the oxidoreductase AOL_s00215g277, the polyprenyl transferase AOL_s00215g276 catalyzes the farnesylation of toluquinol to produce farnesyl hydroquinone, the hybrid precursor for biosynthesis of SECs. Farnesyl hydroquinone undergoes epoxidation and then subsequent dehydrogenation to form farnesyl epoxy-quinone, the first and simplest SEC. The cytochrome P450 monooxygenase AOL_s00215g278 and the FAD-dependent monooxygenase AOL_s00215g279 might be involved in the oxygenation of the phenol moiety, most likely in the epoxy formation. The cytochrome P450 monooxygenases AOL_s00215g274 and AOL_s00215g280 are involved in specific regional ketone reductions at respectively C-4 and C-1 of farnesyl epoxy-quinone PubMed:33823587. This chain is Polyprenyl transferase AOL_s00215g276, found in Arthrobotrys oligospora (strain ATCC 24927 / CBS 115.81 / DSM 1491) (Nematode-trapping fungus).